The primary structure comprises 142 residues: Galactose-6-phosphate isomerase subunit LacA (142 aa).

The protein belongs to the LacAB/RpiB family. In terms of assembly, heteromultimeric protein consisting of LacA and LacB.

The catalysed reaction is aldehydo-D-galactose 6-phosphate = keto-D-tagatose 6-phosphate. Its pathway is carbohydrate metabolism; D-galactose 6-phosphate degradation; D-tagatose 6-phosphate from D-galactose 6-phosphate: step 1/1. In Staphylococcus haemolyticus (strain JCSC1435), this protein is Galactose-6-phosphate isomerase subunit LacA.